The primary structure comprises 107 residues: CRISPR-associated endoribonuclease Cas2 (107 aa).

Aspartate 6 provides a ligand contact to Mg(2+).

The protein belongs to the CRISPR-associated endoribonuclease Cas2 protein family. As to quaternary structure, homodimer, forms a heterotetramer with a Cas1 homodimer. It depends on Mg(2+) as a cofactor.

CRISPR (clustered regularly interspaced short palindromic repeat), is an adaptive immune system that provides protection against mobile genetic elements (viruses, transposable elements and conjugative plasmids). CRISPR clusters contain sequences complementary to antecedent mobile elements and target invading nucleic acids. CRISPR clusters are transcribed and processed into CRISPR RNA (crRNA). Functions as a ssRNA-specific endoribonuclease. Involved in the integration of spacer DNA into the CRISPR cassette. This chain is CRISPR-associated endoribonuclease Cas2, found in Streptococcus mutans serotype c (strain NN2025).